The sequence spans 259 residues: Thiazole synthase (259 aa).

Lys-100 serves as the catalytic Schiff-base intermediate with DXP. Residues Gly-161, 187-188 (AG), and 209-210 (NT) each bind 1-deoxy-D-xylulose 5-phosphate.

The protein belongs to the ThiG family. Homotetramer. Forms heterodimers with either ThiH or ThiS.

It is found in the cytoplasm. The enzyme catalyses [ThiS sulfur-carrier protein]-C-terminal-Gly-aminoethanethioate + 2-iminoacetate + 1-deoxy-D-xylulose 5-phosphate = [ThiS sulfur-carrier protein]-C-terminal Gly-Gly + 2-[(2R,5Z)-2-carboxy-4-methylthiazol-5(2H)-ylidene]ethyl phosphate + 2 H2O + H(+). It functions in the pathway cofactor biosynthesis; thiamine diphosphate biosynthesis. Functionally, catalyzes the rearrangement of 1-deoxy-D-xylulose 5-phosphate (DXP) to produce the thiazole phosphate moiety of thiamine. Sulfur is provided by the thiocarboxylate moiety of the carrier protein ThiS. In vitro, sulfur can be provided by H(2)S. This Halalkalibacterium halodurans (strain ATCC BAA-125 / DSM 18197 / FERM 7344 / JCM 9153 / C-125) (Bacillus halodurans) protein is Thiazole synthase.